A 112-amino-acid polypeptide reads, in one-letter code: Putative pterin-4-alpha-carbinolamine dehydratase (112 aa).

Belongs to the pterin-4-alpha-carbinolamine dehydratase family.

The catalysed reaction is (4aS,6R)-4a-hydroxy-L-erythro-5,6,7,8-tetrahydrobiopterin = (6R)-L-erythro-6,7-dihydrobiopterin + H2O. This Shewanella frigidimarina (strain NCIMB 400) protein is Putative pterin-4-alpha-carbinolamine dehydratase.